Consider the following 297-residue polypeptide: Nitrogenase iron protein (297 aa).

11 to 18 (GKGGIGKS) serves as a coordination point for ATP. Cysteine 99 contributes to the [4Fe-4S] cluster binding site. At arginine 102 the chain carries ADP-ribosylarginine; by dinitrogenase reductase ADP-ribosyltransferase. A [4Fe-4S] cluster-binding site is contributed by cysteine 133.

The protein belongs to the NifH/BchL/ChlL family. As to quaternary structure, homodimer. [4Fe-4S] cluster serves as cofactor. Post-translationally, the reversible ADP-ribosylation of Arg-102 inactivates the nitrogenase reductase and regulates nitrogenase activity.

It carries out the reaction N2 + 8 reduced [2Fe-2S]-[ferredoxin] + 16 ATP + 16 H2O = H2 + 8 oxidized [2Fe-2S]-[ferredoxin] + 2 NH4(+) + 16 ADP + 16 phosphate + 6 H(+). In terms of biological role, the key enzymatic reactions in nitrogen fixation are catalyzed by the nitrogenase complex, which has 2 components: the iron protein and the molybdenum-iron protein. The polypeptide is Nitrogenase iron protein (Mesorhizobium japonicum (strain LMG 29417 / CECT 9101 / MAFF 303099) (Mesorhizobium loti (strain MAFF 303099))).